The chain runs to 302 residues: Taste receptor type 2 member 104 (302 aa).

Residues 1-7 (MLSALES) lie on the Extracellular side of the membrane. A helical transmembrane segment spans residues 8–28 (ILLSVATSEAMLGVLGNTFIV). Residues 29–43 (LVNYTDWVRNKKLSK) lie on the Cytoplasmic side of the membrane. The chain crosses the membrane as a helical span at residues 44-64 (INFILTGLAISRIFTIWIITL). The Extracellular portion of the chain corresponds to 65 to 87 (DAYTKVFLLTMLMPSSLHECMSY). The helical transmembrane segment at 88–108 (IWVIINHLSVWFSTSLGIFYF) threads the bilayer. Topologically, residues 109-128 (LKIANFSHYIFLWMKRRADK) are cytoplasmic. The helical transmembrane segment at 129–149 (VFVFLIVFLIITWLASFPLAV) threads the bilayer. The Extracellular segment spans residues 150-182 (KVIKDVKIYQSNTSWLIHLEKSELLINYVFANM). An N-linked (GlcNAc...) asparagine glycan is attached at Asn161. Residues 183–203 (GPISLFIVAIIACFLLTISLW) form a helical membrane-spanning segment. Over 204-229 (RHSRQMQSIGSGFRDLNTEAHMKAMK) the chain is Cytoplasmic. Residues 230 to 250 (VLIAFIILFILYFLGILIETL) traverse the membrane as a helical segment. The Extracellular portion of the chain corresponds to 251–259 (CLFLTNNKL). The chain crosses the membrane as a helical span at residues 260–280 (LFIFGFTLSAMYPCCHSFILI). The Cytoplasmic portion of the chain corresponds to 281-302 (LTSRELKQATMRALQRLKCCET).

This sequence belongs to the G-protein coupled receptor T2R family.

It is found in the membrane. Its function is as follows. Putative taste receptor which may play a role in the perception of bitterness. The sequence is that of Taste receptor type 2 member 104 from Mus musculus (Mouse).